Consider the following 95-residue polypeptide: Co-chaperonin GroES (95 aa).

Belongs to the GroES chaperonin family. In terms of assembly, heptamer of 7 subunits arranged in a ring. Interacts with the chaperonin GroEL.

The protein resides in the cytoplasm. Functionally, together with the chaperonin GroEL, plays an essential role in assisting protein folding. The GroEL-GroES system forms a nano-cage that allows encapsulation of the non-native substrate proteins and provides a physical environment optimized to promote and accelerate protein folding. GroES binds to the apical surface of the GroEL ring, thereby capping the opening of the GroEL channel. In Rickettsia akari (strain Hartford), this protein is Co-chaperonin GroES.